The primary structure comprises 348 residues: Dihydroorotase (348 aa).

Histidine 17 and histidine 19 together coordinate Zn(2+). Substrate-binding positions include 19 to 21 and asparagine 45; that span reads HLR. Zn(2+)-binding residues include lysine 103, histidine 140, and histidine 178. Lysine 103 is subject to N6-carboxylysine. Histidine 140 contacts substrate. Leucine 223 contacts substrate. Residue aspartate 251 participates in Zn(2+) binding. Residue aspartate 251 is part of the active site. Positions 255 and 267 each coordinate substrate.

The protein belongs to the metallo-dependent hydrolases superfamily. DHOase family. Class II DHOase subfamily. As to quaternary structure, homodimer. It depends on Zn(2+) as a cofactor.

The enzyme catalyses (S)-dihydroorotate + H2O = N-carbamoyl-L-aspartate + H(+). It participates in pyrimidine metabolism; UMP biosynthesis via de novo pathway; (S)-dihydroorotate from bicarbonate: step 3/3. In terms of biological role, catalyzes the reversible cyclization of carbamoyl aspartate to dihydroorotate. This Salmonella heidelberg (strain SL476) protein is Dihydroorotase.